Here is a 355-residue protein sequence, read N- to C-terminus: MTALKNDRFLRALLKQPVDVTPVWMMRQAGRYLPEYRASRANAGDFMSLCMNPEFACEVTMQPLDRYPQLDAAILFSDILTIPDAMGQGLYFETGEGPRFKKVVSTLADIEALPIPDPHKDLGYVMDAVSTIRRELNGRVPLIGFSGSPWTLATYMVEGGSSKDFRKTKAMLYDNPQAMHLLLDKLAQSVTSYLNGQIMAGAQAVQIFDTWGGNLSAAAYQEFSLAYMRKIVSGLIREHEGRKVPVILFTKGGGLWLESIADAGADALGLDWTCDIGEARRRVGGQVALQGNMDPTVLYAKPEAIRTEVGRILASYGKGTGHVFNLGHGITPEVNPEHAGAFLRAVHELSAQYHE.

Substrate-binding positions include 27–31 (RQAGR), aspartate 78, tyrosine 155, threonine 210, and histidine 328.

It belongs to the uroporphyrinogen decarboxylase family. Homodimer.

The protein localises to the cytoplasm. It catalyses the reaction uroporphyrinogen III + 4 H(+) = coproporphyrinogen III + 4 CO2. The protein operates within porphyrin-containing compound metabolism; protoporphyrin-IX biosynthesis; coproporphyrinogen-III from 5-aminolevulinate: step 4/4. Functionally, catalyzes the decarboxylation of four acetate groups of uroporphyrinogen-III to yield coproporphyrinogen-III. The sequence is that of Uroporphyrinogen decarboxylase from Pseudomonas fluorescens (strain SBW25).